Here is a 135-residue protein sequence, read N- to C-terminus: Methylglyoxal synthase (135 aa).

The 135-residue stretch at Met-1 to Phe-135 folds into the MGS-like domain. Substrate-binding positions include His-10, Lys-14, Thr-36 to Thr-39, and Ser-56 to Gly-57. The Proton donor/acceptor role is filled by Asp-62. Residue His-89 participates in substrate binding.

It belongs to the methylglyoxal synthase family.

It carries out the reaction dihydroxyacetone phosphate = methylglyoxal + phosphate. Catalyzes the formation of methylglyoxal from dihydroxyacetone phosphate. In Pseudoalteromonas atlantica (strain T6c / ATCC BAA-1087), this protein is Methylglyoxal synthase.